Consider the following 207-residue polypeptide: Large ribosomal subunit protein uL4 (207 aa).

The segment at 58–78 (AGGGKKPWRQKGTGRARHGSI) is disordered. Over residues 63 to 77 (KPWRQKGTGRARHGS) the composition is skewed to basic residues.

This sequence belongs to the universal ribosomal protein uL4 family. As to quaternary structure, part of the 50S ribosomal subunit.

Functionally, one of the primary rRNA binding proteins, this protein initially binds near the 5'-end of the 23S rRNA. It is important during the early stages of 50S assembly. It makes multiple contacts with different domains of the 23S rRNA in the assembled 50S subunit and ribosome. Forms part of the polypeptide exit tunnel. This Aster yellows witches'-broom phytoplasma (strain AYWB) protein is Large ribosomal subunit protein uL4.